The following is a 115-amino-acid chain: Waprin-like protein (115 aa).

Residues 1-21 form the signal peptide; sequence MNRSLLAFAIVLVLLVAGTSS. One can recognise a WAP domain in the interval 23-69; the sequence is LFNKSGNCPMRNTVTSCTPRCIGDGECSSNQKCCPNKCGTTSCANSS. 4 disulfides stabilise this stretch: Cys30–Cys56, Cys39–Cys60, Cys43–Cys55, and Cys49–Cys65.

It belongs to the venom waprin family. Cys-rich waprin subfamily. Expressed by the venom gland.

It localises to the secreted. Antimicrobial peptides with activity against Gram-positive and Gram-negative bacteria as well as fungi. Recognizes carbohydrates in the microbial cell walls, and induces structural damage to them. Also inhibits microbial serine proteases, as well as mammalian elastases. Carbohydrates that are recognized are LPS, mannan, peptidoglycan, and N-acetl-D-glucosamine. This Tetramorium bicarinatum (Tramp ant) protein is Waprin-like protein.